Here is a 436-residue protein sequence, read N- to C-terminus: Hydrogenobyrinate a,c-diamide synthase (436 aa).

In terms of domain architecture, GATase cobBQ-type spans 244–435; that stretch reads HIAVARDDAF…MHVIDFCGEK (192 aa). The active-site Nucleophile is Cys-327.

It belongs to the CobB/CbiA family. Mg(2+) is required as a cofactor.

The catalysed reaction is hydrogenobyrinate + 2 L-glutamine + 2 ATP + 2 H2O = hydrogenobyrinate a,c-diamide + 2 L-glutamate + 2 ADP + 2 phosphate + 2 H(+). It participates in cofactor biosynthesis; adenosylcobalamin biosynthesis; cob(II)yrinate a,c-diamide from precorrin-2 (aerobic route): step 9/10. Catalyzes the ATP-dependent amidation of the two carboxylate groups at positions a and c of hydrogenobyrinate, using either L-glutamine or ammonia as the nitrogen source. This chain is Hydrogenobyrinate a,c-diamide synthase, found in Brucella anthropi (strain ATCC 49188 / DSM 6882 / CCUG 24695 / JCM 21032 / LMG 3331 / NBRC 15819 / NCTC 12168 / Alc 37) (Ochrobactrum anthropi).